Consider the following 725-residue polypeptide: Non-structural protein 4 (725 aa).

Disordered stretches follow at residues M1–N26 and D666–E725. The span at T7–P16 shows a compositional bias: polar residues. Over residues E675–D686 the composition is skewed to basic and acidic residues. The segment covering D687–D709 has biased composition (acidic residues).

The polypeptide is Non-structural protein 4 (Rice gall dwarf virus (RGDV)).